We begin with the raw amino-acid sequence, 312 residues long: Homeobox-leucine zipper protein ATHB-5 (312 aa).

Residues 1–33 (MKRSRGSSDSLSGFLPIRHSTTDKQISPRPTTT) are disordered. Residues 23 to 33 (DKQISPRPTTT) are compositionally biased toward polar residues. A DNA-binding region (homeobox) is located at residues 69–128 (AAEKKRRLGVEQVKALEKNFEIDNKLEPERKVKLAQELGLQPRQVAIWFQNRRARWKTKQ). The leucine-zipper stretch occupies residues 129 to 164 (LERDYGVLKSNFDALKRNRDSLQRDNDSLLGQIKEL).

This sequence belongs to the HD-ZIP homeobox family. Class I subfamily. As to quaternary structure, interacts with DNA as homodimer. In terms of tissue distribution, widely expressed.

The protein localises to the nucleus. In terms of biological role, probable transcription factor that acts as a positive regulator of ABA-responsiveness, mediating the inhibitory effect of ABA on growth during seedling establishment. Binds to the DNA sequence 5'-CAATNATTG-3'. The polypeptide is Homeobox-leucine zipper protein ATHB-5 (ATHB-5) (Arabidopsis thaliana (Mouse-ear cress)).